Reading from the N-terminus, the 420-residue chain is uncharacterized protein (420 aa).

One can recognise a TRAM domain in the interval N7 to S65. S-adenosyl-L-methionine contacts are provided by Q245, Y280, E304, and D349. Residue C376 is the Nucleophile of the active site.

This sequence belongs to the class I-like SAM-binding methyltransferase superfamily. RNA M5U methyltransferase family.

This is an uncharacterized protein from Corynebacterium diphtheriae (strain ATCC 700971 / NCTC 13129 / Biotype gravis).